The following is a 328-amino-acid chain: Organic solute transporter alpha-like protein (328 aa).

Topologically, residues 1-44 (MNASENYFTMDPTENISQVLDQNRNNTNSLRTHPTVEEYYENMT) are extracellular. 4 N-linked (GlcNAc...) asparagine glycosylation sites follow: Asn2, Asn15, Asn25, and Asn42. Residues 45–65 (AFLSLAIFIASLLTILNISIF) traverse the membrane as a helical segment. Over 66-84 (ATTVSRLRRHLDKPLLGPS) the chain is Cytoplasmic. A helical transmembrane segment spans residues 85 to 105 (IMMVGLYPIISVAALVTILVP). Residue Tyr106 is a topological domain, extracellular. A helical transmembrane segment spans residues 107 to 127 (SWFICHTVMHVMFMVGGPVFR). Residues 128–177 (TLLFRYVGSEQNYVKETAGEAVQLNTPPCCCCCLCLPMVIPTKAKLCISR) are Cytoplasmic-facing. Residues 178-198 (YMVWQMPFWQGSIMLVMNILY) form a helical membrane-spanning segment. The Extracellular segment spans residues 199 to 208 (YRDIQLYRQV). A helical transmembrane segment spans residues 209-229 (MFFFIPFIVCSIVLGAWSLQI). The Cytoplasmic segment spans residues 230–247 (TVRMITKVRGDYQLRKKM). A helical transmembrane segment spans residues 248 to 265 (FCLQLVVMLCKLQYLVLY). Residues 266–287 (DQLDGIKMGGEYPINHTVYKQT) lie on the Extracellular side of the membrane. Residue Asn280 is glycosylated (N-linked (GlcNAc...) asparagine). Residues 288–308 (IINILILVEMVLVSMMVQSAY) form a helical membrane-spanning segment. Residues 309–328 (RTPVQVQIDEVNKEKEVTRI) are Cytoplasmic-facing.

The protein belongs to the OST-alpha family.

It is found in the cell membrane. Its function is as follows. Probable transporter. The polypeptide is Organic solute transporter alpha-like protein (Drosophila melanogaster (Fruit fly)).